Here is a 90-residue protein sequence, read N- to C-terminus: Probable Fe(2+)-trafficking protein (90 aa).

It belongs to the Fe(2+)-trafficking protein family.

Could be a mediator in iron transactions between iron acquisition and iron-requiring processes, such as synthesis and/or repair of Fe-S clusters in biosynthetic enzymes. The protein is Probable Fe(2+)-trafficking protein of Halorhodospira halophila (strain DSM 244 / SL1) (Ectothiorhodospira halophila (strain DSM 244 / SL1)).